The following is a 263-amino-acid chain: Inactive adenylate kinase (263 aa).

Belongs to the adenylate kinase family.

It localises to the cytoplasm. Functionally, lacks adenylate kinase activity. This Plasmodium falciparum (isolate 3D7) protein is Inactive adenylate kinase.